The following is a 492-amino-acid chain: Peptidyl-prolyl cis-trans isomerase-like 4 (492 aa).

Positions 1–161 (MAVLLETTLG…QDIRINHTVI (161 aa)) constitute a PPIase cyclophilin-type domain. Positions 167-188 (DDPPDLLIPDRSPEPTKEQLDS) are disordered. The segment covering 177-187 (RSPEPTKEQLD) has biased composition (basic and acidic residues). Ser-178 bears the Phosphoserine mark. Residue Thr-182 is modified to Phosphothreonine. Glycyl lysine isopeptide (Lys-Gly) (interchain with G-Cter in SUMO2) cross-links involve residues Lys-201, Lys-212, and Lys-218. The 79-residue stretch at 240–318 (NVLFVCKLNP…RRIHVDFSQS (79 aa)) folds into the RRM domain. Glycyl lysine isopeptide (Lys-Gly) (interchain with G-Cter in SUMO2) cross-links involve residues Lys-321 and Lys-362. 2 disordered regions span residues 368–409 (DEQG…NPNQ) and 423–492 (EESC…SKYR). Over residues 377–390 (SHSHTSKKHKKKTR) the composition is skewed to basic residues. Position 393 is a phosphoserine (Ser-393). Lys-405 participates in a covalent cross-link: Glycyl lysine isopeptide (Lys-Gly) (interchain with G-Cter in SUMO2). Residues 426 to 436 (CWEKQKNEKRD) show a composition bias toward basic and acidic residues. Lys-460 participates in a covalent cross-link: Glycyl lysine isopeptide (Lys-Gly) (interchain with G-Cter in SUMO2). A Phosphoserine modification is found at Ser-471. Positions 473 to 485 (KRDRSRSPKKSKA) are enriched in basic residues.

This sequence belongs to the cyclophilin-type PPIase family. PPIL4 subfamily.

Its subcellular location is the nucleus. The catalysed reaction is [protein]-peptidylproline (omega=180) = [protein]-peptidylproline (omega=0). Functionally, PPIases accelerate the folding of proteins. It catalyzes the cis-trans isomerization of proline imidic peptide bonds in oligopeptides. The polypeptide is Peptidyl-prolyl cis-trans isomerase-like 4 (Ppil4) (Mus musculus (Mouse)).